Reading from the N-terminus, the 208-residue chain is Uracil phosphoribosyltransferase (208 aa).

5-phospho-alpha-D-ribose 1-diphosphate-binding positions include R78, R103, and 130-138 (DPMLATGGS). Residues I193 and 198-200 (GDA) each bind uracil. A 5-phospho-alpha-D-ribose 1-diphosphate-binding site is contributed by D199.

This sequence belongs to the UPRTase family. Mg(2+) serves as cofactor.

The enzyme catalyses UMP + diphosphate = 5-phospho-alpha-D-ribose 1-diphosphate + uracil. It participates in pyrimidine metabolism; UMP biosynthesis via salvage pathway; UMP from uracil: step 1/1. Allosterically activated by GTP. Its function is as follows. Catalyzes the conversion of uracil and 5-phospho-alpha-D-ribose 1-diphosphate (PRPP) to UMP and diphosphate. The chain is Uracil phosphoribosyltransferase from Psychromonas ingrahamii (strain DSM 17664 / CCUG 51855 / 37).